Reading from the N-terminus, the 322-residue chain is Germ cell-specific gene 1-like protein (322 aa).

Topologically, residues 1–8 are cytoplasmic; it reads MKTSRRGR. A helical transmembrane segment spans residues 9 to 29; it reads ALLAVALNLLALLFATTAFLT. Over 30 to 122 the chain is Extracellular; the sequence is TYWCQGTQRV…FIDLAPASEK (93 aa). Residues 123–143 traverse the membrane as a helical segment; sequence GVLWLSVVSEVLYILLLVVGF. The Cytoplasmic segment spans residues 144-163; the sequence is SLMCLELLHSSSVIDGLKLN. A helical transmembrane segment spans residues 164–184; that stretch reads AFAAVFTVLSGLLGMVAHMMY. The Extracellular segment spans residues 185–207; that stretch reads TQVFQVTVSLGPEDWRPHSWDYG. A helical membrane pass occupies residues 208–228; the sequence is WSFCLAWGSFTCCMAASVTTL. The Cytoplasmic segment spans residues 229 to 322; the sequence is NSYTKTVIEF…RQCWVLGHWV (94 aa). S274 is subject to Phosphoserine.

This sequence belongs to the GSG1 family. As to quaternary structure, component of the inner core of AMPAR complexes. AMPAR complexes consist of an inner core made of 4 pore-forming GluA/GRIA proteins (GRIA1, GRIA2, GRIA3 and GRIA4) and 4 major auxiliary subunits arranged in a twofold symmetry. One of the two pairs of distinct binding sites is occupied either by CNIH2, CNIH3 or CACNG2, CACNG3. The other harbors CACNG2, CACNG3, CACNG4, CACNG8 or GSG1L. This inner core of AMPAR complexes is complemented by outer core constituents binding directly to the GluA/GRIA proteins at sites distinct from the interaction sites of the inner core constituents. Outer core constituents include at least PRRT1, PRRT2, CKAMP44/SHISA9, FRRS1L and NRN1. The proteins of the inner and outer core serve as a platform for other, more peripherally associated AMPAR constituents. Alone or in combination, these auxiliary subunits control the gating and pharmacology of the AMPAR complexes and profoundly impact their biogenesis and protein processing. Expressed in the brain (at protein level).

Its subcellular location is the cell membrane. The protein localises to the synapse. Its function is as follows. As a component of the inner core of AMPAR complexes, modifies AMPA receptor (AMPAR) gating. This Rattus norvegicus (Rat) protein is Germ cell-specific gene 1-like protein (Gsg1l).